A 196-amino-acid chain; its full sequence is Chorion protein S19 (196 aa).

A signal peptide spans 1–16 (MNTFATLAIFISACLA).

This sequence belongs to the chorion protein S19 family.

Its subcellular location is the secreted. Its function is as follows. Chorion membrane (egg shell) protein; plays a role in protecting the egg from the environment. In Drosophila grimshawi (Hawaiian fruit fly), this protein is Chorion protein S19 (Cp19).